Reading from the N-terminus, the 170-residue chain is Large ribosomal subunit protein uL10 (170 aa).

It belongs to the universal ribosomal protein uL10 family. Part of the ribosomal stalk of the 50S ribosomal subunit. The N-terminus interacts with L11 and the large rRNA to form the base of the stalk. The C-terminus forms an elongated spine to which L12 dimers bind in a sequential fashion forming a multimeric L10(L12)X complex.

In terms of biological role, forms part of the ribosomal stalk, playing a central role in the interaction of the ribosome with GTP-bound translation factors. This chain is Large ribosomal subunit protein uL10, found in Chlamydia caviae (strain ATCC VR-813 / DSM 19441 / 03DC25 / GPIC) (Chlamydophila caviae).